The primary structure comprises 355 residues: 45 kDa calcium-binding protein (355 aa).

An N-terminal signal peptide occupies residues 1–29; the sequence is MASRQGPLCGLAPCCLWLLGVILLMNASA. Asn-26 is a glycosylation site (N-linked (GlcNAc...) asparagine). EF-hand domains follow at residues 91-126 and 130-165; these read KSRR…KTAE and EAVA…TKGH. A Phosphoserine modification is found at Ser-92. 10 residues coordinate Ca(2+): Asp-104, Asn-106, Asp-108, Arg-110, Glu-115, Asp-143, Asp-145, Asp-147, His-149, and Glu-154. Phosphothreonine is present on residues Thr-186 and Thr-210. EF-hand domains are found at residues 226 to 261, 271 to 306, and 307 to 342; these read MLQF…TVEN, WVRD…MNEF, and SALN…FTGS. Ca(2+)-binding residues include Asp-239, Asp-241, Asp-243, Lys-245, and Glu-250. Phosphothreonine is present on Thr-258. Asp-284, Asn-286, and Asp-288 together coordinate Ca(2+). Thr-292 is subject to Phosphothreonine. 6 residues coordinate Ca(2+): Glu-295, Asp-320, Asn-322, Asn-324, Tyr-326, and Glu-331. The necessary for intracellular retention in Golgi apparatus lumen stretch occupies residues 302-355; it reads PMNEFSALNEAKQMIAIADENQNHYLEPEEVLKYSEFFTGSKLVDYARSVHEEF.

Belongs to the CREC family.

The protein localises to the golgi apparatus lumen. In terms of biological role, may regulate calcium-dependent activities in the endoplasmic reticulum lumen or post-ER compartment. The sequence is that of 45 kDa calcium-binding protein (SDF4) from Capra hircus (Goat).